Consider the following 289-residue polypeptide: Formamidopyrimidine-DNA glycosylase (289 aa).

The active-site Schiff-base intermediate with DNA is Pro-2. The Proton donor role is filled by Glu-3. Lys-61 (proton donor; for beta-elimination activity) is an active-site residue. The DNA site is built by His-96, Arg-115, and Lys-161. The segment at Ser-247–Arg-281 adopts an FPG-type zinc-finger fold. The Proton donor; for delta-elimination activity role is filled by Arg-271.

Belongs to the FPG family. Monomer. Requires Zn(2+) as cofactor.

The enzyme catalyses Hydrolysis of DNA containing ring-opened 7-methylguanine residues, releasing 2,6-diamino-4-hydroxy-5-(N-methyl)formamidopyrimidine.. The catalysed reaction is 2'-deoxyribonucleotide-(2'-deoxyribose 5'-phosphate)-2'-deoxyribonucleotide-DNA = a 3'-end 2'-deoxyribonucleotide-(2,3-dehydro-2,3-deoxyribose 5'-phosphate)-DNA + a 5'-end 5'-phospho-2'-deoxyribonucleoside-DNA + H(+). Involved in base excision repair of DNA damaged by oxidation or by mutagenic agents. Acts as a DNA glycosylase that recognizes and removes damaged bases. Has a preference for oxidized purines, such as 7,8-dihydro-8-oxoguanine (8-oxoG). Has AP (apurinic/apyrimidinic) lyase activity and introduces nicks in the DNA strand. Cleaves the DNA backbone by beta-delta elimination to generate a single-strand break at the site of the removed base with both 3'- and 5'-phosphates. In Rhodococcus opacus (strain B4), this protein is Formamidopyrimidine-DNA glycosylase.